Reading from the N-terminus, the 239-residue chain is Ribosomal RNA small subunit methyltransferase G (239 aa).

Residues glycine 77, phenylalanine 82, 128–129, and arginine 147 contribute to the S-adenosyl-L-methionine site; that span reads AE. Residues 216 to 239 are disordered; it reads EKKKQTPKKYPRKPGTPNKSPIEG.

This sequence belongs to the methyltransferase superfamily. RNA methyltransferase RsmG family.

It localises to the cytoplasm. Its function is as follows. Specifically methylates the N7 position of guanine in position 535 of 16S rRNA. The polypeptide is Ribosomal RNA small subunit methyltransferase G (Bacillus pumilus (strain SAFR-032)).